Here is a 362-residue protein sequence, read N- to C-terminus: Ribosome-binding ATPase YchF (362 aa).

Positions 3 to 255 constitute an OBG-type G domain; that stretch reads FKCGIIGLPN…MSDEEKKSFM (253 aa). Position 12–17 (12–17) interacts with ATP; that stretch reads NVGKST. Mg(2+)-binding residues include S16 and T36. The TGS domain maps to 277 to 360; that stretch reads NLITFFTVGD…QDGDIIHFLF (84 aa).

It belongs to the TRAFAC class OBG-HflX-like GTPase superfamily. OBG GTPase family. YchF/OLA1 subfamily. It depends on Mg(2+) as a cofactor.

ATPase that binds to both the 70S ribosome and the 50S ribosomal subunit in a nucleotide-independent manner. This Buchnera aphidicola subsp. Acyrthosiphon pisum (strain APS) (Acyrthosiphon pisum symbiotic bacterium) protein is Ribosome-binding ATPase YchF.